The primary structure comprises 82 residues: Large ribosomal subunit protein bL31B (82 aa).

The protein belongs to the bacterial ribosomal protein bL31 family. Type B subfamily. As to quaternary structure, part of the 50S ribosomal subunit.

This chain is Large ribosomal subunit protein bL31B, found in Dichelobacter nodosus (strain VCS1703A).